A 117-amino-acid chain; its full sequence is Early E3 13.3 kDa protein (117 aa).

This Canine adenovirus serotype 1 (strain Glaxo) (CAdV-1) protein is Early E3 13.3 kDa protein.